The chain runs to 247 residues: MSLLSVKDLTGGYTRNPVLKNVSFTLEPNQIVGLIGLNGAGKSTTIRHIIGLMDPHKGSIELNGKTFAEDPEGYRSQFTYIPETPVLYEELTLMEHLELTAMAYGLSKETMEKRLPPLLKEFRMEKRLKWFPAHFSKGMKQKVMIMCAFLAEPALYIIDEPFLGLDPLAINALLERMNEAKKGGASVLMSTHILATAERYCDSFIILHNGEVRARGTLSELREQFGMKDAALDDLYLELTKEDAGHE.

One can recognise an ABC transporter domain in the interval 4–234 (LSVKDLTGGY…FGMKDAALDD (231 aa)). Residue 36–43 (GLNGAGKS) coordinates ATP.

Belongs to the ABC transporter superfamily.

In terms of biological role, has a role in exoprotein production, sporulation and competence. The chain is ABC-type transporter ATP-binding protein EcsA (ecsA) from Bacillus subtilis (strain 168).